We begin with the raw amino-acid sequence, 274 residues long: Diaminopimelate epimerase (274 aa).

Substrate contacts are provided by asparagine 11, glutamine 44, and asparagine 64. The active-site Proton donor is the cysteine 73. Substrate contacts are provided by residues 74–75 (GN), asparagine 157, asparagine 190, and 208–209 (ER). Cysteine 217 functions as the Proton acceptor in the catalytic mechanism. 218-219 (GS) serves as a coordination point for substrate.

The protein belongs to the diaminopimelate epimerase family. Homodimer.

The protein resides in the cytoplasm. It carries out the reaction (2S,6S)-2,6-diaminopimelate = meso-2,6-diaminopimelate. It participates in amino-acid biosynthesis; L-lysine biosynthesis via DAP pathway; DL-2,6-diaminopimelate from LL-2,6-diaminopimelate: step 1/1. In terms of biological role, catalyzes the stereoinversion of LL-2,6-diaminopimelate (L,L-DAP) to meso-diaminopimelate (meso-DAP), a precursor of L-lysine and an essential component of the bacterial peptidoglycan. This is Diaminopimelate epimerase from Erwinia tasmaniensis (strain DSM 17950 / CFBP 7177 / CIP 109463 / NCPPB 4357 / Et1/99).